The primary structure comprises 130 residues: Ribonuclease P protein component (130 aa).

The protein belongs to the RnpA family. In terms of assembly, consists of a catalytic RNA component (M1 or rnpB) and a protein subunit.

The catalysed reaction is Endonucleolytic cleavage of RNA, removing 5'-extranucleotides from tRNA precursor.. RNaseP catalyzes the removal of the 5'-leader sequence from pre-tRNA to produce the mature 5'-terminus. It can also cleave other RNA substrates such as 4.5S RNA. The protein component plays an auxiliary but essential role in vivo by binding to the 5'-leader sequence and broadening the substrate specificity of the ribozyme. The polypeptide is Ribonuclease P protein component (Azotobacter vinelandii (strain DJ / ATCC BAA-1303)).